Consider the following 523-residue polypeptide: GMP synthase [glutamine-hydrolyzing] (523 aa).

A Glutamine amidotransferase type-1 domain is found at 8–205 (KILILDFGSQ…VVNICGCATN (198 aa)). Residue cysteine 85 is the Nucleophile of the active site. Residues histidine 179 and glutamate 181 contribute to the active site. One can recognise a GMPS ATP-PPase domain in the interval 206–398 (WTPENIIEDA…LGLPAEMLNR (193 aa)). 233–239 (SGGVDSS) is an ATP binding site.

Homodimer.

The enzyme catalyses XMP + L-glutamine + ATP + H2O = GMP + L-glutamate + AMP + diphosphate + 2 H(+). It functions in the pathway purine metabolism; GMP biosynthesis; GMP from XMP (L-Gln route): step 1/1. Its function is as follows. Catalyzes the synthesis of GMP from XMP. This Actinobacillus succinogenes (strain ATCC 55618 / DSM 22257 / CCUG 43843 / 130Z) protein is GMP synthase [glutamine-hydrolyzing].